A 283-amino-acid polypeptide reads, in one-letter code: Gap junction beta-1 protein (283 aa).

The Cytoplasmic segment spans residues 1-22 (MNWTGLYTLLSGVNRHSTAIGR). A helical transmembrane segment spans residues 23-45 (VWLSVIFIFRIMVLVVAAESVWG). The Extracellular segment spans residues 46–75 (DEKSSFICNTLQPGCNSVCYDQFFPISHVR). Residues 76 to 95 (LWSLQLILVSTPALLVAMHV) form a helical membrane-spanning segment. The Cytoplasmic segment spans residues 96–130 (AHQQHIEKKMLRLEGHGDPLHLEEVKRHKVHISGT). A helical transmembrane segment spans residues 131–153 (LWWTYVISVVFRLLFEAVFMYVF). Topologically, residues 154 to 191 (YLLYPGYAMVRLVKCDVYPCPNTVDCFVSRPTEKTVFT) are extracellular. A helical membrane pass occupies residues 192–214 (VFMLAASGICIILNVAEVVYLII). Topologically, residues 215-283 (RACARRAQRR…AEKSDRCSAC (69 aa)) are cytoplasmic. S233, S258, S266, and S277 each carry phosphoserine.

This sequence belongs to the connexin family. Beta-type (group I) subfamily. In terms of assembly, a connexon is composed of a hexamer of connexins. Interacts with CNST.

It localises to the cell membrane. Its subcellular location is the cell junction. It is found in the gap junction. Its function is as follows. One gap junction consists of a cluster of closely packed pairs of transmembrane channels, the connexons, through which materials of low MW diffuse from one cell to a neighboring cell. The polypeptide is Gap junction beta-1 protein (GJB1) (Homo sapiens (Human)).